Consider the following 468-residue polypeptide: ATP synthase subunit beta (468 aa).

ATP is bound at residue Gly-155–Thr-162.

This sequence belongs to the ATPase alpha/beta chains family. F-type ATPases have 2 components, CF(1) - the catalytic core - and CF(0) - the membrane proton channel. CF(1) has five subunits: alpha(3), beta(3), gamma(1), delta(1), epsilon(1). CF(0) has three main subunits: a(1), b(2) and c(9-12). The alpha and beta chains form an alternating ring which encloses part of the gamma chain. CF(1) is attached to CF(0) by a central stalk formed by the gamma and epsilon chains, while a peripheral stalk is formed by the delta and b chains.

It is found in the cell membrane. The enzyme catalyses ATP + H2O + 4 H(+)(in) = ADP + phosphate + 5 H(+)(out). Produces ATP from ADP in the presence of a proton gradient across the membrane. The catalytic sites are hosted primarily by the beta subunits. The polypeptide is ATP synthase subunit beta (Streptococcus thermophilus (strain CNRZ 1066)).